Reading from the N-terminus, the 349-residue chain is MAILSIVSIFAAEKSYSIPPASNKLLASPALNPLYDAKADAEINVWCDEFLKLQPGSEKSVFIRESRLGLLAAYAYPSISYEKIVPVAKFIAWLFLADDILDNPEISSSDMRNVATAYKMVFKGRFDEAALLVKNQELLRQVKMLSEVLKELSLHLVDKSGRFMNSMTKVLDMFEIESNWLHKQIVPNLDTYMWLREITSGVAPCFAMLDGLLQLGLEERGVLDHPLIRKVEEIGTHHIALHNDLISFRKEWAKGNYLNAVPILASIHKCGLNEAIAMLASMVEDLEKEFIGTKQEIISSGLARKQGVMDYVNGVEVWMAANAEWGWLSARYHGIGWIPPPEKSGTFQL.

Mg(2+)-binding residues include aspartate 98, aspartate 102, asparagine 243, and serine 247. The DDXXD motif signature appears at aspartate 98 to aspartate 102.

The protein belongs to the terpene synthase family. Requires Mg(2+) as cofactor.

It functions in the pathway secondary metabolite biosynthesis; terpenoid biosynthesis. Sesquiterpene synthase converting farnesyl diphosphate to six sesquiterpenes, with beta-elemene, delta-cadinene and an unidentified oxygenated sesquiterpene as the major products. Has no diterpene synthase activity. The chain is Microbial Terpene synthase-like protein 1 from Selaginella moellendorffii (Spikemoss).